Consider the following 403-residue polypeptide: Argininosuccinate synthase (403 aa).

ATP is bound at residue 10 to 18 (AYSGGLDTS). Tyrosine 87 contacts L-citrulline. Glycine 117 contributes to the ATP binding site. L-aspartate contacts are provided by threonine 119, asparagine 123, and aspartate 124. Position 123 (asparagine 123) interacts with L-citrulline. L-citrulline is bound by residues arginine 127, serine 175, serine 184, glutamate 260, and tyrosine 272.

This sequence belongs to the argininosuccinate synthase family. Type 1 subfamily. In terms of assembly, homotetramer.

It localises to the cytoplasm. The catalysed reaction is L-citrulline + L-aspartate + ATP = 2-(N(omega)-L-arginino)succinate + AMP + diphosphate + H(+). It participates in amino-acid biosynthesis; L-arginine biosynthesis; L-arginine from L-ornithine and carbamoyl phosphate: step 2/3. In Bacillus pumilus (strain SAFR-032), this protein is Argininosuccinate synthase.